We begin with the raw amino-acid sequence, 227 residues long: Cleavage and polyadenylation specificity factor subunit 5 (227 aa).

Ser-2 bears the N-acetylserine mark. The necessary for RNA-binding stretch occupies residues 2–147; it reads SVVPPNRSQT…DWVIDDCIGN (146 aa). Arg-15 carries the omega-N-methylarginine modification. N6-acetyllysine occurs at positions 23 and 29. Residue Tyr-40 is modified to Phosphotyrosine. Lys-56 bears the N6-acetyllysine mark. One can recognise a Nudix hydrolase domain in the interval 76 to 201; it reads MRRTVEGVLI…KLVAAPLFEL (126 aa). Residues 81–160 are necessary for interactions with PAPOLA and PABPN1; it reads EGVLIVHEHR…PNFEPPQYPY (80 aa). The segment at 102-104 is interaction with RNA; the sequence is TFF. The Nudix box motif lies at 109 to 130; sequence GELNPGEDEVEGLKRLMTEILG.

The protein belongs to the Nudix hydrolase family. CPSF5 subfamily. Homodimer (via N- and C-terminus); binds RNA as homodimer. Component of the cleavage factor Im (CFIm) complex which is a heterotetramer composed of two subunits of NUDT21/CPSF5 and two subunits of CPSF6 or CPSF7 or a heterodimer of CPSF6 and CPSF7. The cleavage factor Im (CFIm) complex associates with the CPSF and CSTF complexes to promote the assembly of the core mRNA 3'-processing machinery. Interacts with CPSF6 (via the RRM domain); this interaction is direct and enhances binding to RNA. Interacts with CPSF7. Interacts with FIP1L1; this interaction occurs in a RNA sequence-specific manner. Interacts with PABPN1. Interacts (via N-terminus) with PAPOLA (via C-terminus); this interaction is direct and diminished by acetylation. Interacts with SNRNP70. Interacts with VIRMA. Acetylated mainly by p300/CBP, recruited to the complex by CPSF6. Acetylation decreases interaction with PAPAO. Deacetylated by the class I/II HDACs, HDAC1, HDAC3 and HDAC10, and by the class III HDACs, SIRT1 and SIRT2. In terms of tissue distribution, expressed in testis. Expressed in male germ cells (at protein level).

It is found in the nucleus. The protein localises to the cytoplasm. Its function is as follows. Component of the cleavage factor Im (CFIm) complex that functions as an activator of the pre-mRNA 3'-end cleavage and polyadenylation processing required for the maturation of pre-mRNA into functional mRNAs. CFIm contributes to the recruitment of multiprotein complexes on specific sequences on the pre-mRNA 3'-end, so called cleavage and polyadenylation signals (pA signals). Most pre-mRNAs contain multiple pA signals, resulting in alternative cleavage and polyadenylation (APA) producing mRNAs with variable 3'-end formation. The CFIm complex acts as a key regulator of cleavage and polyadenylation site choice during APA through its binding to 5'-UGUA-3' elements localized in the 3'-untranslated region (UTR) for a huge number of pre-mRNAs. NUDT21/CPSF5 activates indirectly the mRNA 3'-processing machinery by recruiting CPSF6 and/or CPSF7. Binds to 5'-UGUA-3' elements localized upstream of pA signals that act as enhancers of pre-mRNA 3'-end processing. The homodimer mediates simultaneous sequence-specific recognition of two 5'-UGUA-3' elements within the pre-mRNA. Plays a role in somatic cell fate transitions and pluripotency by regulating widespread changes in gene expression through an APA-dependent function. Binds to chromatin. Binds to, but does not hydrolyze mono- and di-adenosine nucleotides. The polypeptide is Cleavage and polyadenylation specificity factor subunit 5 (Mus musculus (Mouse)).